The primary structure comprises 346 residues: Uracil-DNA glycosylase (346 aa).

The segment at 1–105 (MSGKITDFFE…KLKNEEKSEE (105 aa)) is disordered. Residues 20–29 (AENKDNDKEL) show a composition bias toward basic and acidic residues. Low complexity predominate over residues 30–42 (TSTTTTTTTTSTT). Residues 43 to 64 (SKKKVAAAPKKKAAVASKKRKH) show a composition bias toward basic residues. Residues 67–86 (SDEETDKEEQQNDDDDDGEE) show a composition bias toward acidic residues. Asp186 functions as the Proton acceptor in the catalytic mechanism.

It belongs to the uracil-DNA glycosylase (UDG) superfamily. UNG family.

Its subcellular location is the mitochondrion. It localises to the nucleus. It carries out the reaction Hydrolyzes single-stranded DNA or mismatched double-stranded DNA and polynucleotides, releasing free uracil.. Its function is as follows. Excises uracil residues from the DNA which can arise as a result of misincorporation of dUMP residues by DNA polymerase or due to deamination of cytosine. This chain is Uracil-DNA glycosylase (uglA), found in Dictyostelium discoideum (Social amoeba).